The following is a 575-amino-acid chain: 2-succinyl-5-enolpyruvyl-6-hydroxy-3-cyclohexene-1-carboxylate synthase (575 aa).

Belongs to the TPP enzyme family. MenD subfamily. In terms of assembly, homodimer. Mg(2+) serves as cofactor. The cofactor is Mn(2+). It depends on thiamine diphosphate as a cofactor.

It catalyses the reaction isochorismate + 2-oxoglutarate + H(+) = 5-enolpyruvoyl-6-hydroxy-2-succinyl-cyclohex-3-ene-1-carboxylate + CO2. It functions in the pathway quinol/quinone metabolism; 1,4-dihydroxy-2-naphthoate biosynthesis; 1,4-dihydroxy-2-naphthoate from chorismate: step 2/7. It participates in quinol/quinone metabolism; menaquinone biosynthesis. Catalyzes the thiamine diphosphate-dependent decarboxylation of 2-oxoglutarate and the subsequent addition of the resulting succinic semialdehyde-thiamine pyrophosphate anion to isochorismate to yield 2-succinyl-5-enolpyruvyl-6-hydroxy-3-cyclohexene-1-carboxylate (SEPHCHC). The polypeptide is 2-succinyl-5-enolpyruvyl-6-hydroxy-3-cyclohexene-1-carboxylate synthase (Syntrophus aciditrophicus (strain SB)).